Here is a 252-residue protein sequence, read N- to C-terminus: Agamous-like MADS-box protein AGL6 (252 aa).

Residues arginine 3–phenylalanine 57 enclose the MADS-box domain. In terms of domain architecture, K-box spans threonine 86 to alanine 176. Positions glutamine 91 to glutamate 173 form a coiled coil.

Forms a heterodimer with AGAMOUS. Interacts with AGL15 and AGL16. As to expression, preferentially expressed in flowers.

The protein resides in the nucleus. Probable transcription factor. Forms a heterodimer via the K-box domain with AG, that could be involved in genes regulation during floral meristem development. The protein is Agamous-like MADS-box protein AGL6 (AGL6) of Arabidopsis thaliana (Mouse-ear cress).